We begin with the raw amino-acid sequence, 461 residues long: Calcitonin gene-related peptide type 1 receptor (461 aa).

The first 22 residues, 1-22, serve as a signal peptide directing secretion; it reads MEKKCTLYFLVLLPFFMILVTA. The Extracellular portion of the chain corresponds to 23-139; that stretch reads ELEESPEDSI…NTHEKVKTAL (117 aa). Intrachain disulfides connect C48/C74, C65/C105, and C88/C127. N-linked (GlcNAc...) asparagine glycans are attached at residues N66, N118, and N123. The chain crosses the membrane as a helical span at residues 140-164; the sequence is NLFYLTIIGHGLSIASLLISLGIFF. Residues 165–175 lie on the Cytoplasmic side of the membrane; that stretch reads YFKSLSCQRIT. A helical membrane pass occupies residues 176-198; sequence LHKNLFFSFVCNSVVTIIHLTAV. Over 199–209 the chain is Extracellular; it reads ANNQALVATNP. A helical transmembrane segment spans residues 210 to 238; that stretch reads VSCKVSQFIHLYLMGCNYFWMLCEGIYLH. Residues 239 to 252 are Cytoplasmic-facing; the sequence is TLIVVAVFAEKQHL. The helical transmembrane segment at 253 to 273 threads the bilayer; it reads MWYYFLGWGFPLIPACIHAIA. At 274-289 the chain is on the extracellular side; sequence RSLYYNDNCWISSDTH. A required for RAMP3 interaction region spans residues 288–289; sequence TH. Residues 290–314 traverse the membrane as a helical segment; sequence LLYIIHGPICAALLVNLFFLLNIVR. Residues 315 to 329 lie on the Cytoplasmic side of the membrane; it reads VLITKLKVTHQAESN. The helical transmembrane segment at 330–351 threads the bilayer; the sequence is LYMKAVRATLILVPLLGIEFVL. The Extracellular segment spans residues 352–366; it reads IPWRPEGKIAEEVYD. Residues 367 to 387 traverse the membrane as a helical segment; the sequence is YIMHILMHFQGLLVSTIFCFF. Phosphoserine is present on residues S420 and S445.

Belongs to the G-protein coupled receptor 2 family. Heterodimer of CALCRL and RAMP1; the receptor complex functions as CGRP receptor. Heterodimer of CALCRL and RAMP2 or CALCRL and RAMP3; the complexes function as adrenomedullin receptor. In terms of tissue distribution, predominantly expressed in the lung and heart.

It localises to the cell membrane. Its function is as follows. G protein-coupled receptor which specificity is determined by its interaction with receptor-activity-modifying proteins (RAMPs). Together with RAMP1, form the receptor complex for calcitonin-gene-related peptides CALCA/CGRP1 and CALCB/CGRP2. Together with RAMP2 or RAMP3, function as receptor complexes for adrenomedullin (ADM and ADM2). Ligand binding causes a conformation change that triggers signaling via guanine nucleotide-binding proteins (G proteins) and modulates the activity of downstream effectors. Activates cAMP-dependent pathway. The sequence is that of Calcitonin gene-related peptide type 1 receptor from Homo sapiens (Human).